Consider the following 1186-residue polypeptide: Pesticidal crystal protein Cry14Aa (1186 aa).

This sequence belongs to the delta endotoxin family.

Its function is as follows. Promotes colloidosmotic lysis by binding to the midgut epithelial cells of insects. The chain is Pesticidal crystal protein Cry14Aa (cry14Aa) from Bacillus thuringiensis subsp. sotto.